The following is a 431-amino-acid chain: Cortical fragment-lytic enzyme (431 aa).

2 LysM domains span residues 2–46 (QIYV…TIVI) and 51–95 (QFYD…RLYI). The GH18 domain occupies 103–431 (IESNAYLEPR…QFNVVKKTFR (329 aa)). Residues 148–149 (VA) and 174–177 (ENQA) contribute to the chitin site. Glutamate 217 (proton donor) is an active-site residue. Chitin-binding positions include tyrosine 218, 280–283 (MTYE), and tryptophan 406.

Belongs to the glycosyl hydrolase 18 family. Chitinase class II subfamily.

The protein localises to the spore coat. Functionally, N-acetylglucosaminidase involved in cortex peptidoglycan degradation during germination. Cleaves only partially degraded spore peptidoglycans. Recognizes muramic acid delta-lactam residues specific to spore peptidoglycans. This Bacillus subtilis (strain 168) protein is Cortical fragment-lytic enzyme.